The primary structure comprises 237 residues: Probable transcriptional regulatory protein Bpro_2928 (237 aa).

This sequence belongs to the TACO1 family.

The protein localises to the cytoplasm. The polypeptide is Probable transcriptional regulatory protein Bpro_2928 (Polaromonas sp. (strain JS666 / ATCC BAA-500)).